Consider the following 82-residue polypeptide: Envelope small membrane protein (82 aa).

Residues 1 to 16 (MVDLFFNDTAWYIGQI) are Virion surface-facing. Residues 17 to 37 (LVLVLFCLISLIFVVAFLATI) traverse the membrane as a helical segment. At 38–79 (KLCMQLCGFCNFFIISPSAYVYKRGMQLYKSYSEQVIPPTSD) the chain is on the intravirion side.

This sequence belongs to the betacoronaviruses E protein family. Homopentamer. Interacts with membrane protein M in the budding compartment of the host cell, which is located between endoplasmic reticulum and the Golgi complex. Interacts with Nucleoprotein.

Its subcellular location is the host Golgi apparatus membrane. In terms of biological role, plays a central role in virus morphogenesis and assembly. Acts as a viroporin and self-assembles in host membranes forming pentameric protein-lipid pores that allow ion transport. Also plays a role in the induction of apoptosis. The polypeptide is Envelope small membrane protein (Human coronavirus HKU1 (isolate N1) (HCoV-HKU1)).